Consider the following 215-residue polypeptide: Eukaryotic translation initiation factor 4E-1A (215 aa).

A compositionally biased stretch (low complexity) spans 1 to 14 (MATAEPETSTNPSN). The segment at 1-23 (MATAEPETSTNPSNSEEKNEENE) is disordered. MRNA is bound by residues 54 to 55 (WQ), 100 to 101 (WE), 155 to 160 (RTKGDK), and 203 to 205 (TKS).

Belongs to the eukaryotic initiation factor 4E family. In terms of assembly, interacts with eif4ebp3l. In terms of tissue distribution, expressed in all tissues examined, including gill, fin, heart, intestine, muscle, ovary and testis.

It is found in the cytoplasm. The protein localises to the nucleus. Recognizes and binds the 7-methylguanosine (m7G)-containing mRNA cap during an early step in the initiation of protein synthesis and facilitates ribosome binding by inducing the unwinding of the mRNAs secondary structures. Also promotes export of a subset of mRNAs from the nucleus to the cytoplasm. This is Eukaryotic translation initiation factor 4E-1A from Danio rerio (Zebrafish).